The primary structure comprises 404 residues: Cysteine desulfurase IscS (404 aa).

Pyridoxal 5'-phosphate contacts are provided by residues 75-76, Asn-155, Gln-183, and 203-205; these read AT and SAH. Lys-206 is modified (N6-(pyridoxal phosphate)lysine). Pyridoxal 5'-phosphate is bound at residue Thr-243. The active-site Cysteine persulfide intermediate is Cys-328. Position 328 (Cys-328) interacts with [2Fe-2S] cluster.

This sequence belongs to the class-V pyridoxal-phosphate-dependent aminotransferase family. NifS/IscS subfamily. As to quaternary structure, homodimer. Forms a heterotetramer with IscU, interacts with other sulfur acceptors. Requires pyridoxal 5'-phosphate as cofactor.

The protein resides in the cytoplasm. It catalyses the reaction (sulfur carrier)-H + L-cysteine = (sulfur carrier)-SH + L-alanine. It participates in cofactor biosynthesis; iron-sulfur cluster biosynthesis. Its function is as follows. Master enzyme that delivers sulfur to a number of partners involved in Fe-S cluster assembly, tRNA modification or cofactor biosynthesis. Catalyzes the removal of elemental sulfur atoms from cysteine to produce alanine. Functions as a sulfur delivery protein for Fe-S cluster synthesis onto IscU, an Fe-S scaffold assembly protein, as well as other S acceptor proteins. The sequence is that of Cysteine desulfurase IscS from Pseudomonas fluorescens (strain Pf0-1).